The following is a 199-amino-acid chain: MAEEQVLNTHNASILLSAANKSHYPQDDLPEIALAGRSNVGKSSFINTILGRKNLARTSSKPGKTQLLNFFNIDDKLRFVDVPGYGYAKVSKSERAKWGKMIEEYLTSRDNLRAVVSLVDLRHAPSKEDIQMYDFLKYYDIPVIVVATKADKIPHGKWNKHESVVKKALNFDKSDTFIVFSSVERIGIDDSWDAILEQV.

The region spanning 28–199 is the EngB-type G domain; it reads DLPEIALAGR…DSWDAILEQV (172 aa). Residues 36–43, 63–67, 81–84, 148–151, and 180–182 contribute to the GTP site; these read GRSNVGKS, GKTQL, DVPG, TKAD, and FSS. S43 and T65 together coordinate Mg(2+).

Belongs to the TRAFAC class TrmE-Era-EngA-EngB-Septin-like GTPase superfamily. EngB GTPase family. The cofactor is Mg(2+).

Functionally, necessary for normal cell division and for the maintenance of normal septation. This chain is Probable GTP-binding protein EngB, found in Streptococcus pyogenes serotype M3 (strain SSI-1).